Consider the following 287-residue polypeptide: Nucleotide-binding protein TGRD_433 (287 aa).

G9–S16 contributes to the ATP binding site. D60 to A63 is a binding site for GTP.

The protein belongs to the RapZ-like family.

Displays ATPase and GTPase activities. The chain is Nucleotide-binding protein TGRD_433 from Endomicrobium trichonymphae.